The primary structure comprises 572 residues: Urease subunit alpha (572 aa).

The region spanning 136 to 572 (GGIDTHIHFI…VPLGQRYFLF (437 aa)) is the Urease domain. The Ni(2+) site is built by histidine 141, histidine 143, and lysine 224. Residue lysine 224 is modified to N6-carboxylysine. Position 226 (histidine 226) interacts with substrate. 2 residues coordinate Ni(2+): histidine 253 and histidine 279. The Proton donor role is filled by histidine 327. Residue aspartate 367 coordinates Ni(2+).

This sequence belongs to the metallo-dependent hydrolases superfamily. Urease alpha subunit family. In terms of assembly, heterotrimer of UreA (gamma), UreB (beta) and UreC (alpha) subunits. Three heterotrimers associate to form the active enzyme. Ni cation serves as cofactor. In terms of processing, carboxylation allows a single lysine to coordinate two nickel ions.

Its subcellular location is the cytoplasm. It catalyses the reaction urea + 2 H2O + H(+) = hydrogencarbonate + 2 NH4(+). It participates in nitrogen metabolism; urea degradation; CO(2) and NH(3) from urea (urease route): step 1/1. This is Urease subunit alpha from Haemophilus influenzae (strain 86-028NP).